We begin with the raw amino-acid sequence, 450 residues long: Glucose-6-phosphate isomerase (450 aa).

Glutamate 290 functions as the Proton donor in the catalytic mechanism. Residues histidine 311 and lysine 425 contribute to the active site.

It belongs to the GPI family.

Its subcellular location is the cytoplasm. It carries out the reaction alpha-D-glucose 6-phosphate = beta-D-fructose 6-phosphate. It participates in carbohydrate biosynthesis; gluconeogenesis. The protein operates within carbohydrate degradation; glycolysis; D-glyceraldehyde 3-phosphate and glycerone phosphate from D-glucose: step 2/4. Its function is as follows. Catalyzes the reversible isomerization of glucose-6-phosphate to fructose-6-phosphate. The protein is Glucose-6-phosphate isomerase of Lactiplantibacillus plantarum (strain ATCC BAA-793 / NCIMB 8826 / WCFS1) (Lactobacillus plantarum).